A 288-amino-acid chain; its full sequence is ATP synthase gamma chain (288 aa).

Belongs to the ATPase gamma chain family. In terms of assembly, F-type ATPases have 2 components, CF(1) - the catalytic core - and CF(0) - the membrane proton channel. CF(1) has five subunits: alpha(3), beta(3), gamma(1), delta(1), epsilon(1). CF(0) has three main subunits: a, b and c.

The protein resides in the cell membrane. Functionally, produces ATP from ADP in the presence of a proton gradient across the membrane. The gamma chain is believed to be important in regulating ATPase activity and the flow of protons through the CF(0) complex. The chain is ATP synthase gamma chain from Shouchella clausii (strain KSM-K16) (Alkalihalobacillus clausii).